Reading from the N-terminus, the 293-residue chain is 4-hydroxy-tetrahydrodipicolinate synthase (293 aa).

Threonine 44 contributes to the pyruvate binding site. Residue tyrosine 132 is the Proton donor/acceptor of the active site. Lysine 160 acts as the Schiff-base intermediate with substrate in catalysis. Isoleucine 204 provides a ligand contact to pyruvate.

The protein belongs to the DapA family. In terms of assembly, homotetramer; dimer of dimers.

The protein resides in the cytoplasm. The catalysed reaction is L-aspartate 4-semialdehyde + pyruvate = (2S,4S)-4-hydroxy-2,3,4,5-tetrahydrodipicolinate + H2O + H(+). It participates in amino-acid biosynthesis; L-lysine biosynthesis via DAP pathway; (S)-tetrahydrodipicolinate from L-aspartate: step 3/4. Its function is as follows. Catalyzes the condensation of (S)-aspartate-beta-semialdehyde [(S)-ASA] and pyruvate to 4-hydroxy-tetrahydrodipicolinate (HTPA). The chain is 4-hydroxy-tetrahydrodipicolinate synthase from Hyphomonas neptunium (strain ATCC 15444).